A 412-amino-acid polypeptide reads, in one-letter code: UPF0754 membrane protein MAE_37850 (412 aa).

A run of 2 helical transmembrane segments spans residues 3-23 (LPTLWTWILPPIAGAIIGYFT) and 387-407 (IVNLGGILGLLVGLMQTIILI).

Belongs to the UPF0754 family.

It is found in the cell inner membrane. This chain is UPF0754 membrane protein MAE_37850, found in Microcystis aeruginosa (strain NIES-843 / IAM M-2473).